The following is a 271-amino-acid chain: Urease accessory protein UreD (271 aa).

The protein belongs to the UreD family. UreD, UreF and UreG form a complex that acts as a GTP-hydrolysis-dependent molecular chaperone, activating the urease apoprotein by helping to assemble the nickel containing metallocenter of UreC. The UreE protein probably delivers the nickel.

It localises to the cytoplasm. In terms of biological role, required for maturation of urease via the functional incorporation of the urease nickel metallocenter. The protein is Urease accessory protein UreD of Haemophilus influenzae (strain PittEE).